A 367-amino-acid polypeptide reads, in one-letter code: Heme A synthase 2 (367 aa).

5 helical membrane passes run 28-48, 114-134, 143-163, 180-200, and 221-241; these read MVAI…GIGA, MWGR…LWTG, WLVT…WMVA, VHYC…LTVL, and MAMG…FLSG. His-284 provides a ligand contact to heme. Helical transmembrane passes span 286 to 306, 314 to 334, and 340 to 360; these read LLGT…IRAD, AFLV…TTLV, and IGIV…WAWF. His-344 is a binding site for heme.

This sequence belongs to the COX15/CtaA family. Type 2 subfamily. In terms of assembly, interacts with CtaB. Heme b serves as cofactor.

The protein resides in the cell membrane. It carries out the reaction Fe(II)-heme o + 2 A + H2O = Fe(II)-heme a + 2 AH2. Its pathway is porphyrin-containing compound metabolism; heme A biosynthesis; heme A from heme O: step 1/1. Its function is as follows. Catalyzes the conversion of heme O to heme A by two successive hydroxylations of the methyl group at C8. The first hydroxylation forms heme I, the second hydroxylation results in an unstable dihydroxymethyl group, which spontaneously dehydrates, resulting in the formyl group of heme A. This Acidiphilium cryptum (strain JF-5) protein is Heme A synthase 2.